The chain runs to 123 residues: Probable prefoldin subunit 4 (123 aa).

This sequence belongs to the prefoldin subunit beta family. In terms of assembly, heterohexamer of two PFD-alpha type and four PFD-beta type subunits.

Binds specifically to cytosolic chaperonin (c-CPN) and transfers target proteins to it. Binds to nascent polypeptide chain and promotes folding in an environment in which there are many competing pathways for nonnative proteins. This chain is Probable prefoldin subunit 4, found in Schizosaccharomyces pombe (strain 972 / ATCC 24843) (Fission yeast).